Consider the following 142-residue polypeptide: MKTFVAKPETVKREWYVVDAADKTLGRLATEIASRLRGKHKPEYTPHVDTGDYIVVINAEKVVVTGNKAKGKMYYSHTGYPGGLKETNFEKLQAFKPEMIIEKAVKGMLPKGPLGRDMFRKMKVFAGPEHKHAAQQPQVLDI.

The protein belongs to the universal ribosomal protein uL13 family. Part of the 50S ribosomal subunit.

This protein is one of the early assembly proteins of the 50S ribosomal subunit, although it is not seen to bind rRNA by itself. It is important during the early stages of 50S assembly. The polypeptide is Large ribosomal subunit protein uL13 (Pseudoalteromonas atlantica (strain T6c / ATCC BAA-1087)).